Here is a 456-residue protein sequence, read N- to C-terminus: Peptide chain release factor PrfB1, chloroplastic (456 aa).

Residues 1–58 (MSMELTVLGPLAGRSFAIAGKPKLLLLRPTNLPLLRLSLPLSLPNFSSSSRFNSPIVF) constitute a chloroplast transit peptide.

This sequence belongs to the prokaryotic/mitochondrial release factor family. As to expression, expressed in leaves, stems and flowers.

It localises to the plastid. It is found in the chloroplast stroma. In terms of biological role, directs the termination of translation in response to the peptide chain termination codon UGA. Required for the proper translation, stability and normal processing of UGA-containing polycistronic transcripts in chloroplasts. In Arabidopsis thaliana (Mouse-ear cress), this protein is Peptide chain release factor PrfB1, chloroplastic.